The chain runs to 366 residues: UDP-N-acetylglucosamine--N-acetylmuramyl-(pentapeptide) pyrophosphoryl-undecaprenol N-acetylglucosamine transferase (366 aa).

Residues 10-12 (TGG), asparagine 124, arginine 165, serine 195, isoleucine 250, and glutamine 295 each bind UDP-N-acetyl-alpha-D-glucosamine.

This sequence belongs to the glycosyltransferase 28 family. MurG subfamily.

The protein localises to the cell inner membrane. The catalysed reaction is di-trans,octa-cis-undecaprenyl diphospho-N-acetyl-alpha-D-muramoyl-L-alanyl-D-glutamyl-meso-2,6-diaminopimeloyl-D-alanyl-D-alanine + UDP-N-acetyl-alpha-D-glucosamine = di-trans,octa-cis-undecaprenyl diphospho-[N-acetyl-alpha-D-glucosaminyl-(1-&gt;4)]-N-acetyl-alpha-D-muramoyl-L-alanyl-D-glutamyl-meso-2,6-diaminopimeloyl-D-alanyl-D-alanine + UDP + H(+). It participates in cell wall biogenesis; peptidoglycan biosynthesis. Functionally, cell wall formation. Catalyzes the transfer of a GlcNAc subunit on undecaprenyl-pyrophosphoryl-MurNAc-pentapeptide (lipid intermediate I) to form undecaprenyl-pyrophosphoryl-MurNAc-(pentapeptide)GlcNAc (lipid intermediate II). This chain is UDP-N-acetylglucosamine--N-acetylmuramyl-(pentapeptide) pyrophosphoryl-undecaprenol N-acetylglucosamine transferase, found in Thermodesulfovibrio yellowstonii (strain ATCC 51303 / DSM 11347 / YP87).